Reading from the N-terminus, the 57-residue chain is Large ribosomal subunit protein eL20 (57 aa).

It belongs to the eukaryotic ribosomal protein eL20 family. Part of the 50S ribosomal subunit. Binds 23S rRNA.

This is Large ribosomal subunit protein eL20 from Halorhabdus utahensis (strain DSM 12940 / JCM 11049 / AX-2).